Consider the following 530-residue polypeptide: Glutamyl-tRNA reductase 2, chloroplastic (530 aa).

The N-terminal 64 residues, 1–64 (MAVSSAFVVT…RCEISPSNKA (64 aa)), are a transit peptide targeting the chloroplast. Residues 134–137 (TCNR), Ser-194, 199–201 (EGQ), and Gln-205 contribute to the substrate site. Residue Cys-135 is the Nucleophile of the active site. Residue 277–282 (GAGKMG) coordinates NADP(+).

The protein belongs to the glutamyl-tRNA reductase family. In terms of tissue distribution, expressed in roots and flowers. Detected in leaves, hypocotyls and cotyledons.

Its subcellular location is the plastid. It is found in the chloroplast. It catalyses the reaction (S)-4-amino-5-oxopentanoate + tRNA(Glu) + NADP(+) = L-glutamyl-tRNA(Glu) + NADPH + H(+). The protein operates within porphyrin-containing compound metabolism; protoporphyrin-IX biosynthesis; 5-aminolevulinate from L-glutamyl-tRNA(Glu): step 1/2. Its pathway is porphyrin-containing compound metabolism; chlorophyll biosynthesis. In terms of biological role, catalyzes the NADPH-dependent reduction of glutamyl-tRNA(Glu) to glutamate 1-semialdehyde (GSA). Probably involved in wound-induced supply of heme to defensive hemoproteins outside plastids. The chain is Glutamyl-tRNA reductase 2, chloroplastic (HEMA2) from Arabidopsis thaliana (Mouse-ear cress).